A 422-amino-acid chain; its full sequence is Bifunctional enzyme IspD/IspF (422 aa).

The segment at methionine 1–proline 267 is 2-C-methyl-D-erythritol 4-phosphate cytidylyltransferase. Positions leucine 268–arginine 422 are 2-C-methyl-D-erythritol 2,4-cyclodiphosphate synthase. A divalent metal cation-binding residues include aspartate 274 and histidine 276. 4-CDP-2-C-methyl-D-erythritol 2-phosphate-binding positions include aspartate 274–histidine 276 and histidine 301–serine 302. Histidine 309 provides a ligand contact to a divalent metal cation. 4-CDP-2-C-methyl-D-erythritol 2-phosphate-binding positions include aspartate 323–glycine 325, phenylalanine 404, and arginine 407.

In the N-terminal section; belongs to the IspD/TarI cytidylyltransferase family. IspD subfamily. It in the C-terminal section; belongs to the IspF family. A divalent metal cation is required as a cofactor.

It carries out the reaction 2-C-methyl-D-erythritol 4-phosphate + CTP + H(+) = 4-CDP-2-C-methyl-D-erythritol + diphosphate. It catalyses the reaction 4-CDP-2-C-methyl-D-erythritol 2-phosphate = 2-C-methyl-D-erythritol 2,4-cyclic diphosphate + CMP. The protein operates within isoprenoid biosynthesis; isopentenyl diphosphate biosynthesis via DXP pathway; isopentenyl diphosphate from 1-deoxy-D-xylulose 5-phosphate: step 2/6. It functions in the pathway isoprenoid biosynthesis; isopentenyl diphosphate biosynthesis via DXP pathway; isopentenyl diphosphate from 1-deoxy-D-xylulose 5-phosphate: step 4/6. Its function is as follows. Bifunctional enzyme that catalyzes the formation of 4-diphosphocytidyl-2-C-methyl-D-erythritol from CTP and 2-C-methyl-D-erythritol 4-phosphate (MEP) (IspD), and catalyzes the conversion of 4-diphosphocytidyl-2-C-methyl-D-erythritol 2-phosphate (CDP-ME2P) to 2-C-methyl-D-erythritol 2,4-cyclodiphosphate (ME-CPP) with a corresponding release of cytidine 5-monophosphate (CMP) (IspF). This Tropheryma whipplei (strain TW08/27) (Whipple's bacillus) protein is Bifunctional enzyme IspD/IspF.